A 68-amino-acid chain; its full sequence is DNA-directed RNA polymerase subunit omega (68 aa).

It belongs to the RNA polymerase subunit omega family. The RNAP catalytic core consists of 2 alpha, 1 beta, 1 beta' and 1 omega subunit. When a sigma factor is associated with the core the holoenzyme is formed, which can initiate transcription.

The enzyme catalyses RNA(n) + a ribonucleoside 5'-triphosphate = RNA(n+1) + diphosphate. Promotes RNA polymerase assembly. Latches the N- and C-terminal regions of the beta' subunit thereby facilitating its interaction with the beta and alpha subunits. This is DNA-directed RNA polymerase subunit omega from Desulfitobacterium hafniense (strain DSM 10664 / DCB-2).